A 241-amino-acid polypeptide reads, in one-letter code: Aquaporin Z 1 (241 aa).

Residues 23 to 43 (AVFAAAFPELGIGFLGVAFAF) form a helical membrane-spanning segment. The short motif at 63-65 (NPA) is the NPA 1 element. Helical transmembrane passes span 85–105 (IVAQ…ILTG), 129–149 (LLSA…VILG), and 156–176 (PVGF…LISI). Residues 184–186 (NPA) carry the NPA 2 motif. A helical transmembrane segment spans residues 204–224 (WLFWLAPILGGAIGAVVWKIF).

It belongs to the MIP/aquaporin (TC 1.A.8) family. Homotetramer.

The protein localises to the cell inner membrane. It catalyses the reaction H2O(in) = H2O(out). In terms of biological role, channel that permits osmotically driven movement of water in both directions. It is involved in the osmoregulation and in the maintenance of cell turgor during volume expansion in rapidly growing cells. It mediates rapid entry or exit of water in response to abrupt changes in osmolarity. This chain is Aquaporin Z 1, found in Agrobacterium fabrum (strain C58 / ATCC 33970) (Agrobacterium tumefaciens (strain C58)).